A 272-amino-acid chain; its full sequence is Elongation factor Ts (272 aa).

Residues 76 to 79 (TDFV) are involved in Mg(2+) ion dislocation from EF-Tu.

Belongs to the EF-Ts family.

The protein localises to the cytoplasm. Associates with the EF-Tu.GDP complex and induces the exchange of GDP to GTP. It remains bound to the aminoacyl-tRNA.EF-Tu.GTP complex up to the GTP hydrolysis stage on the ribosome. The protein is Elongation factor Ts of Corynebacterium jeikeium (strain K411).